The sequence spans 342 residues: MILSIESSCDDSSLALTRIEDAKLIAHFKISQEKHHSSYGGVVPELASRLHAENLPLLLERIKISLNKDFSKLKAIAITNQPGLSVTLIEGLMMAKALSLSLNLPLILEDHLRGHVYSLFINEKKTCMPLSVLLVSGGHSLILEARNYEDIKIMATSLDDSFGESFDKVSKMLNLGYPGGPVIEKLALDYAHKNEPLMFPIPLKNSLNLAFSFSGLKNAVRLEIEKNAPNLNEITKQKIGYHFQSVAIEHLIQQTKRYFKTKRPKIFGIVGGASQNLVLRKAFENLCDEFDCKLVLAPLEFCSDNAAMIGRSSLEAYQKKHFVPLEKASISPRTLLKKALSE.

Positions 111 and 115 each coordinate Fe cation. Substrate-binding positions include 134-138 (LVSGG), aspartate 167, glycine 180, and asparagine 276. Aspartate 304 lines the Fe cation pocket.

This sequence belongs to the KAE1 / TsaD family. The cofactor is Fe(2+).

It is found in the cytoplasm. The catalysed reaction is L-threonylcarbamoyladenylate + adenosine(37) in tRNA = N(6)-L-threonylcarbamoyladenosine(37) in tRNA + AMP + H(+). Required for the formation of a threonylcarbamoyl group on adenosine at position 37 (t(6)A37) in tRNAs that read codons beginning with adenine. Is involved in the transfer of the threonylcarbamoyl moiety of threonylcarbamoyl-AMP (TC-AMP) to the N6 group of A37, together with TsaE and TsaB. TsaD likely plays a direct catalytic role in this reaction. In Helicobacter acinonychis (strain Sheeba), this protein is tRNA N6-adenosine threonylcarbamoyltransferase.